A 368-amino-acid polypeptide reads, in one-letter code: Ethanol acetyltransferase 1 (368 aa).

Residues 1-21 (MFLSLRPSLSVSRLAVVRRAY) constitute a mitochondrion transit peptide. The 105-residue stretch at 67–171 (PIIFFHGLLG…IIDNAPEPQP (105 aa)) folds into the AB hydrolase-1 domain. Catalysis depends on charge relay system residues S140, D164, and H315. The interval 344–368 (RNKDPNNYMQTQNSISNSDTMGQSL) is disordered. A compositionally biased stretch (polar residues) spans 348–368 (PNNYMQTQNSISNSDTMGQSL).

Belongs to the AB hydrolase superfamily.

The protein resides in the mitochondrion. The enzyme catalyses ethanol + acetyl-CoA = ethyl acetate + CoA. It catalyses the reaction acetyl-CoA + H2O = acetate + CoA + H(+). It carries out the reaction ethyl acetate + H2O = ethanol + acetate + H(+). Functionally, alcohol acetyltransferase that catalyzes the synthesis of ethyl acetate from ethanol and acetyl-CoA. Can also function as a thioesterase by hydrolyzing acetyl-CoA in the absence of ethanol, as well as esterase hydrolyzing ethyl acetate. The polypeptide is Ethanol acetyltransferase 1 (EAT1) (Kluyveromyces lactis (strain ATCC 8585 / CBS 2359 / DSM 70799 / NBRC 1267 / NRRL Y-1140 / WM37) (Yeast)).